Consider the following 187-residue polypeptide: Peptidyl-tRNA hydrolase (187 aa).

Tyr-15 is a tRNA binding site. His-20 functions as the Proton acceptor in the catalytic mechanism. Phe-64, Asn-66, and Asn-112 together coordinate tRNA.

The protein belongs to the PTH family. In terms of assembly, monomer.

It localises to the cytoplasm. It catalyses the reaction an N-acyl-L-alpha-aminoacyl-tRNA + H2O = an N-acyl-L-amino acid + a tRNA + H(+). Its function is as follows. Hydrolyzes ribosome-free peptidyl-tRNAs (with 1 or more amino acids incorporated), which drop off the ribosome during protein synthesis, or as a result of ribosome stalling. In terms of biological role, catalyzes the release of premature peptidyl moieties from peptidyl-tRNA molecules trapped in stalled 50S ribosomal subunits, and thus maintains levels of free tRNAs and 50S ribosomes. The sequence is that of Peptidyl-tRNA hydrolase from Bacteroides fragilis (strain ATCC 25285 / DSM 2151 / CCUG 4856 / JCM 11019 / LMG 10263 / NCTC 9343 / Onslow / VPI 2553 / EN-2).